Consider the following 119-residue polypeptide: Ribonuclease P protein component (119 aa).

The protein belongs to the RnpA family. As to quaternary structure, consists of a catalytic RNA component (M1 or rnpB) and a protein subunit.

It carries out the reaction Endonucleolytic cleavage of RNA, removing 5'-extranucleotides from tRNA precursor.. Functionally, RNaseP catalyzes the removal of the 5'-leader sequence from pre-tRNA to produce the mature 5'-terminus. It can also cleave other RNA substrates such as 4.5S RNA. The protein component plays an auxiliary but essential role in vivo by binding to the 5'-leader sequence and broadening the substrate specificity of the ribozyme. The chain is Ribonuclease P protein component from Pediococcus pentosaceus (strain ATCC 25745 / CCUG 21536 / LMG 10740 / 183-1w).